The following is a 215-amino-acid chain: Putative lipoprotein NMB1124/NMB1162 (215 aa).

The first 16 residues, 1–16, serve as a signal peptide directing secretion; sequence MKPLILGLAAVLALSA. Cysteine 17 carries N-palmitoyl cysteine lipidation. Cysteine 17 carries the S-diacylglycerol cysteine lipid modification.

Its subcellular location is the cell membrane. The sequence is that of Putative lipoprotein NMB1124/NMB1162 from Neisseria meningitidis serogroup B (strain ATCC BAA-335 / MC58).